Reading from the N-terminus, the 449-residue chain is GTPase Der (449 aa).

2 consecutive EngA-type G domains span residues 4-169 (PIVA…PAGE) and 177-353 (IQVA…EQHR). GTP is bound by residues 10 to 17 (GRPNVGKS), 57 to 61 (DTGGL), 120 to 123 (NKCE), 183 to 190 (GRPNVGKS), 230 to 234 (DTAGI), and 295 to 298 (NKWD). In terms of domain architecture, KH-like spans 354–439 (RRVTTAVVND…PIRLLWRSKK (86 aa)).

It belongs to the TRAFAC class TrmE-Era-EngA-EngB-Septin-like GTPase superfamily. EngA (Der) GTPase family. In terms of assembly, associates with the 50S ribosomal subunit.

In terms of biological role, GTPase that plays an essential role in the late steps of ribosome biogenesis. This chain is GTPase Der, found in Thermosynechococcus vestitus (strain NIES-2133 / IAM M-273 / BP-1).